The sequence spans 90 residues: Small ribosomal subunit protein uS15 (90 aa).

This sequence belongs to the universal ribosomal protein uS15 family. In terms of assembly, part of the 30S ribosomal subunit. Forms a bridge to the 50S subunit in the 70S ribosome, contacting the 23S rRNA.

In terms of biological role, one of the primary rRNA binding proteins, it binds directly to 16S rRNA where it helps nucleate assembly of the platform of the 30S subunit by binding and bridging several RNA helices of the 16S rRNA. Its function is as follows. Forms an intersubunit bridge (bridge B4) with the 23S rRNA of the 50S subunit in the ribosome. This is Small ribosomal subunit protein uS15 from Helicobacter pylori (strain HPAG1).